Consider the following 445-residue polypeptide: Phosphoglucosamine mutase (445 aa).

The active-site Phosphoserine intermediate is Ser-102. Positions 102, 241, 243, and 245 each coordinate Mg(2+). Ser-102 is subject to Phosphoserine.

This sequence belongs to the phosphohexose mutase family. Mg(2+) is required as a cofactor. In terms of processing, activated by phosphorylation.

It catalyses the reaction alpha-D-glucosamine 1-phosphate = D-glucosamine 6-phosphate. Catalyzes the conversion of glucosamine-6-phosphate to glucosamine-1-phosphate. This Haemophilus influenzae (strain ATCC 51907 / DSM 11121 / KW20 / Rd) protein is Phosphoglucosamine mutase.